The primary structure comprises 100 residues: Small ribosomal subunit protein bS20 (100 aa).

The segment covering 1 to 18 has biased composition (basic and acidic residues); it reads MPNKKSAEKRVRQSEQRR. Residues 1 to 26 form a disordered region; sequence MPNKKSAEKRVRQSEQRRQKNRGYQK.

This sequence belongs to the bacterial ribosomal protein bS20 family.

Its function is as follows. Binds directly to 16S ribosomal RNA. The chain is Small ribosomal subunit protein bS20 from Petrotoga mobilis (strain DSM 10674 / SJ95).